Here is a 130-residue protein sequence, read N- to C-terminus: Ribonuclease P protein component (130 aa).

This sequence belongs to the RnpA family. In terms of assembly, consists of a catalytic RNA component (M1 or rnpB) and a protein subunit.

It carries out the reaction Endonucleolytic cleavage of RNA, removing 5'-extranucleotides from tRNA precursor.. RNaseP catalyzes the removal of the 5'-leader sequence from pre-tRNA to produce the mature 5'-terminus. It can also cleave other RNA substrates such as 4.5S RNA. The protein component plays an auxiliary but essential role in vivo by binding to the 5'-leader sequence and broadening the substrate specificity of the ribozyme. This is Ribonuclease P protein component from Azotobacter vinelandii (strain DJ / ATCC BAA-1303).